We begin with the raw amino-acid sequence, 134 residues long: D-dopachrome decarboxylase-like protein (134 aa).

This sequence belongs to the MIF family.

The protein localises to the cytoplasm. Its function is as follows. May have lyase activity. This chain is D-dopachrome decarboxylase-like protein (DDTL), found in Homo sapiens (Human).